The following is a 326-amino-acid chain: MLPAFMSLRHFTTTTMRRAASEFRMPVPWGELRGQVWGPSHGRPVLCLHGWADNSGTFNTLVPLLPNDWRFVAIDFPGHGLSSHRPDGCFYAFPFYVADVRRVVEALQWKRFSIIGHSMGGNVAGMFSALYPEMVESVVLLDTYGFLPTEVTDMFTNMRKGINDQIQYDNMANERKERVYTYEKAKERLKVANPYLSDQSADILLERAVREVDGGFVFTRDFRINLKNIIYINIDQCLHVLSQVKAKVMLLLAKDGLFKTFTLPDGYADRICKSWTDQKATFVEVEGDHHVHLNNPEAVSSVITDFLQPQSPDQTESQSGNQTSRL.

The AB hydrolase-1 domain maps to 44–155 (PVLCLHGWAD…FLPTEVTDMF (112 aa)). Ser-118 is an active-site residue.

The protein belongs to the AB hydrolase superfamily.

In terms of biological role, probable serine hydrolase. This Danio rerio (Zebrafish) protein is Serine hydrolase-like protein (serhl).